A 695-amino-acid chain; its full sequence is Phenoloxidase subunit 2 (695 aa).

Cu cation-binding residues include H215, H219, and H245. The Proton acceptor role is filled by E353. 3 residues coordinate Cu cation: H368, H372, and H408. 2 disulfides stabilise this stretch: C586-C630 and C588-C637.

As to quaternary structure, heterodimer. Forms a complex with an interleukin 1-like protein as a consequence of a host defense response. Requires Cu(2+) as cofactor. In terms of processing, the N-terminus is blocked. In terms of tissue distribution, synthesized by oenocytoids, a type of hemocyte, and released into the hemolymph plasma.

It is found in the secreted. The catalysed reaction is 2 L-dopa + O2 = 2 L-dopaquinone + 2 H2O. It carries out the reaction L-tyrosine + O2 = L-dopaquinone + H2O. Its activity is regulated as follows. Activated by immulectin and lipopolysaccharide. Its function is as follows. This is a copper-containing oxidase that functions in the formation of pigments such as melanins and other polyphenolic compounds. Catalyzes the rate-limiting conversions of tyrosine to DOPA, DOPA to DOPA-quinone and possibly 5,6 dihydroxyindole to indole-5'6 quinone. Binds to the surface of hemocytes and is involved in hemocyte melanization. The sequence is that of Phenoloxidase subunit 2 from Manduca sexta (Tobacco hawkmoth).